Consider the following 128-residue polypeptide: UPF0102 protein BCG_2919c (128 aa).

The protein belongs to the UPF0102 family.

In Mycobacterium bovis (strain BCG / Pasteur 1173P2), this protein is UPF0102 protein BCG_2919c.